A 221-amino-acid chain; its full sequence is Endonuclease V (221 aa).

The Mg(2+) site is built by Asp-44 and Asp-112.

Belongs to the endonuclease V family. It depends on Mg(2+) as a cofactor.

The protein localises to the cytoplasm. It catalyses the reaction Endonucleolytic cleavage at apurinic or apyrimidinic sites to products with a 5'-phosphate.. Functionally, DNA repair enzyme involved in the repair of deaminated bases. Selectively cleaves double-stranded DNA at the second phosphodiester bond 3' to a deoxyinosine leaving behind the intact lesion on the nicked DNA. The chain is Endonuclease V from Trichormus variabilis (strain ATCC 29413 / PCC 7937) (Anabaena variabilis).